Reading from the N-terminus, the 358-residue chain is Probable ABC transporter periplasmic-binding protein y4fP (358 aa).

The first 46 residues, 1–46, serve as a signal peptide directing secretion; it reads MRNVIKLTWSRRKRSASLDKGENIMKLAFAFATAAIVVAAAFPALA.

It belongs to the bacterial solute-binding protein 1 family.

It is found in the periplasm. In terms of biological role, probably part of the binding-protein-dependent transport system y4fNOP. The protein is Probable ABC transporter periplasmic-binding protein y4fP of Sinorhizobium fredii (strain NBRC 101917 / NGR234).